Here is a 377-residue protein sequence, read N- to C-terminus: UDP-N,N'-diacetylbacillosamine 2-epimerase (hydrolyzing) (377 aa).

The protein belongs to the UDP-N-acetylglucosamine 2-epimerase family.

The enzyme catalyses UDP-N,N'-diacetylbacillosamine + H2O = 2,4-diacetamido-2,4,6-trideoxy-alpha-D-mannopyranose + UDP + H(+). Its function is as follows. Involved in biosynthesis of legionaminic acid (5,7-diamino-3,5,7,9-tetradeoxy-D-glycero-D-galacto-non-2-ulosonic acid)(Leg), a sialic acid-like derivative that is incorporated into virulence-associated cell surface glycoconjugates such as lipopolysaccharide (LPS) which could be a key determinant in the ability of L.pneumophila to inhibit the fusion of phagosomes with lysosomes. LPS contains a majority alpha2,4-linked homomer of legionaminic acid. Catalyzes the conversion of UDP-N,N'-diacetylbacillosamine (Bac2Ac4Ac) into 2,4-diacetamido-2,4,6-trideoxymannose and UDP. This Legionella pneumophila subsp. pneumophila (strain Philadelphia 1 / ATCC 33152 / DSM 7513) protein is UDP-N,N'-diacetylbacillosamine 2-epimerase (hydrolyzing).